A 369-amino-acid chain; its full sequence is Chorismate synthase (369 aa).

Positions 48 and 54 each coordinate NADP(+). Residues 125-127, 238-239, G278, 293-297, and R319 each bind FMN; these read RSS, NA, and KPTSS.

It belongs to the chorismate synthase family. Homotetramer. It depends on FMNH2 as a cofactor.

The catalysed reaction is 5-O-(1-carboxyvinyl)-3-phosphoshikimate = chorismate + phosphate. Its pathway is metabolic intermediate biosynthesis; chorismate biosynthesis; chorismate from D-erythrose 4-phosphate and phosphoenolpyruvate: step 7/7. In terms of biological role, catalyzes the anti-1,4-elimination of the C-3 phosphate and the C-6 proR hydrogen from 5-enolpyruvylshikimate-3-phosphate (EPSP) to yield chorismate, which is the branch point compound that serves as the starting substrate for the three terminal pathways of aromatic amino acid biosynthesis. This reaction introduces a second double bond into the aromatic ring system. This is Chorismate synthase from Burkholderia mallei (strain NCTC 10229).